The sequence spans 127 residues: Movement protein TGB2 (127 aa).

The Cytoplasmic segment spans residues 1-24 (MSLSHGTGAPAISTPLTLRPPPDN). A helical transmembrane segment spans residues 25–45 (TKAILTIAIGIAASLVFFMLT). The Lumenal portion of the chain corresponds to 46–85 (RNNLPHVGDNIHSLPHGGSYIDGTKSINYRPPASRYPSSN). A helical transmembrane segment spans residues 86-106 (LLAFAPPILAAVLFFLTQPYL). Residues 107-127 (ATRRSRCVRCFVVHGACTNHT) are Cytoplasmic-facing.

It belongs to the Tymovirales TGBp2 protein family.

The protein resides in the host endoplasmic reticulum membrane. Functionally, plays a role in viral cell-to-cell propagation, by facilitating genome transport to neighboring plant cells through plasmosdesmata,. The protein is Movement protein TGB2 of Setaria italica (Foxtail millet).